Reading from the N-terminus, the 116-residue chain is MAVLVLLFCLVTFPSCVLSQVQLKQSGPGLVQPSQSLSITCTVSGFSLTSYGVHWVRQPPGKGLEWLGVIWSGGSTDYNAAFISRLSISKDNSKSQVFFKMNSLQADDTAIYYCAK.

A signal peptide spans 1–19; that stretch reads MAVLVLLFCLVTFPSCVLS. The 97-residue stretch at 20-116 folds into the Ig-like domain; it reads QVQLKQSGPG…DDTAIYYCAK (97 aa). Cys41 and Cys114 form a disulfide bridge.

This Mus musculus (Mouse) protein is Immunoglobulin heavy variable 2-4.